The following is a 655-amino-acid chain: p-hydroxybenzoic acid efflux pump subunit AaeB (655 aa).

Helical transmembrane passes span 13–33 (FAVKLATAIVLALFVGFHFQL), 38–58 (WAVLTAAIVAAGPAFAAGGEP), 69–89 (LRIIGTFIGCIAGLVIIIAMI), 93–113 (LLMILVCCIWAGFCTWISSLV), 121–141 (WGLAGYTALIIVITIQPEPLL), 152–172 (EIVIGIVCAIMADLLFSPRSI), 370–390 (LFWLWTGWTSGSGAMVMIAVV), 407–427 (FIYGTLAALPLGLLYFLVIIP), 431–451 (QSMLLLCISLAVLGFFLGIEV), 459–479 (MGALASTINIIVLDNPMTFHF), and 482–502 (FLDSALGQIVGCVLAFTVILL).

It belongs to the aromatic acid exporter ArAE (TC 2.A.85) family.

It is found in the cell inner membrane. In terms of biological role, forms an efflux pump with AaeA. Could function as a metabolic relief valve, allowing to eliminate certain compounds when they accumulate to high levels in the cell. This is p-hydroxybenzoic acid efflux pump subunit AaeB from Escherichia coli O7:K1 (strain IAI39 / ExPEC).